The chain runs to 831 residues: Heat shock 70 kDa protein 15 (831 aa).

2 disordered regions span residues 502–579 (EEEV…KKKV) and 784–831 (IMTK…EGST). The segment covering 512–526 (DQSEETAKMDTDKAS) has biased composition (basic and acidic residues). Residues serine 533 and serine 536 each carry the phosphoserine modification. The span at 787 to 800 (KPKPAAKAEAPQAK) shows a compositional bias: low complexity.

Belongs to the heat shock protein 70 (TC 1.A.33) family. HSP110/SSE subfamily.

The protein localises to the cytoplasm. The protein resides in the nucleus. In cooperation with other chaperones, Hsp70s are key components that facilitate folding of de novo synthesized proteins, assist translocation of precursor proteins into organelles, and are responsible for degradation of damaged protein under stress conditions. In Arabidopsis thaliana (Mouse-ear cress), this protein is Heat shock 70 kDa protein 15 (HSP70-15).